A 528-amino-acid polypeptide reads, in one-letter code: UDP-glucuronosyltransferase 2A1 (528 aa).

An N-terminal signal peptide occupies residues 1 to 21 (MLKNILLCSLQISLLGMSLGG). Residues 22 to 494 (NVLIWPMEGS…FQYHSLDVIG (473 aa)) lie on the Extracellular side of the membrane. The N-linked (GlcNAc...) asparagine glycan is linked to Asn-49. An N6-succinyllysine modification is found at Lys-135. Asn-314 carries an N-linked (GlcNAc...) asparagine glycan. Residues 495–515 (FLLACVASAILLVAKCCLFIF) form a helical membrane-spanning segment. At 516–528 (QKVGKTGKKKKRD) the chain is on the cytoplasmic side.

The protein belongs to the UDP-glycosyltransferase family.

It is found in the membrane. The catalysed reaction is glucuronate acceptor + UDP-alpha-D-glucuronate = acceptor beta-D-glucuronoside + UDP + H(+). It catalyses the reaction 16beta,17beta-estriol + UDP-alpha-D-glucuronate = 16beta,17beta-estriol 16-O-(beta-D-glucuronate) + UDP + H(+). It carries out the reaction 16alpha,17alpha-estriol + UDP-alpha-D-glucuronate = 16alpha,17alpha-estriol 16-O-(beta-D-glucuronate) + UDP + H(+). The enzyme catalyses 17alpha-estradiol + UDP-alpha-D-glucuronate = 17alpha-estradiol 17-O-(beta-D-glucuronate) + UDP + H(+). The catalysed reaction is 17alpha-estradiol + UDP-alpha-D-glucuronate = 17alpha-estradiol 3-O-(beta-D-glucuronate) + UDP + H(+). It catalyses the reaction 17beta-estradiol + UDP-alpha-D-glucuronate = 17beta-estradiol 3-O-(beta-D-glucuronate) + UDP + H(+). It carries out the reaction 17beta-estradiol + UDP-alpha-D-glucuronate = 17beta-estradiol 17-O-(beta-D-glucuronate) + UDP + H(+). The enzyme catalyses testosterone + UDP-alpha-D-glucuronate = testosterone 17-O-(beta-D-glucuronate) + UDP + H(+). The catalysed reaction is epitestosterone + UDP-alpha-D-glucuronate = epitestosterone 17-O-(beta-D-glucuronate) + UDP + H(+). It catalyses the reaction lithocholate + UDP-alpha-D-glucuronate = lithocholoyl-3-O-(beta-D-glucuronate) + UDP + H(+). It carries out the reaction lithocholate + UDP-alpha-D-glucuronate = lithocholoyl-24-O-(beta-D-glucuronate) + UDP. The enzyme catalyses deoxycholate + UDP-alpha-D-glucuronate = deoxycholoyl-24-O-(beta-D-glucuronate) + UDP. The catalysed reaction is hyodeoxycholate + UDP-alpha-D-glucuronate = hyodeoxycholate 6-O-(beta-D-glucuronate) + UDP + H(+). It catalyses the reaction hyocholate + UDP-alpha-D-glucuronate = hyocholoyl-24-O-(beta-D-glucuronate) + UDP. In terms of biological role, UDP-glucuronosyltransferase (UGT) that catalyzes phase II biotransformation reactions in which lipophilic substrates are conjugated with glucuronic acid to increase the metabolite's water solubility, thereby facilitating excretion into either the urine or bile. Essential for the elimination and detoxification of drugs, xenobiotics and endogenous compounds. Catalyzes the glucuronidation of endogenous steroid hormones such as androgens (testosterones) and estrogens (estradiol and estriol). Contributes to bile acid (BA) detoxification by catalyzing the glucuronidation of BA substrates, which are natural detergents for dietary lipids absorption. Shows a high affinity to aliphatic odorants such as citronellol as well as olfactory tissue specificity, and therefore may be involved in olfaction. The chain is UDP-glucuronosyltransferase 2A1 from Mus musculus (Mouse).